A 219-amino-acid polypeptide reads, in one-letter code: Small ribosomal subunit protein uS3 (219 aa).

Positions isoleucine 39–lysine 108 constitute a KH type-2 domain.

This sequence belongs to the universal ribosomal protein uS3 family. Part of the 30S ribosomal subunit. Forms a tight complex with proteins S10 and S14.

Its function is as follows. Binds the lower part of the 30S subunit head. Binds mRNA in the 70S ribosome, positioning it for translation. The sequence is that of Small ribosomal subunit protein uS3 from Fusobacterium nucleatum subsp. nucleatum (strain ATCC 25586 / DSM 15643 / BCRC 10681 / CIP 101130 / JCM 8532 / KCTC 2640 / LMG 13131 / VPI 4355).